We begin with the raw amino-acid sequence, 112 residues long: Putative acyl carrier protein, mitochondrial (112 aa).

A mitochondrion-targeting transit peptide spans 1 to 28; it reads MLSRFSSQLRFISAVRPVIPKFQPLRFY. Residues 33–109 enclose the Carrier domain; that stretch reads PDAEKRILKV…DAISYITKNP (77 aa). Ser69 carries the O-(pantetheine 4'-phosphoryl)serine modification.

It belongs to the acyl carrier protein (ACP) family. Post-translationally, 4'-phosphopantetheine is transferred from CoA to a specific serine of apo-ACP by acpS. This modification is essential for activity because fatty acids are bound in thioester linkage to the sulfhydryl of the prosthetic group.

It is found in the mitochondrion. The protein operates within lipid metabolism; fatty acid biosynthesis. Its function is as follows. Carrier of the growing fatty acid chain in fatty acid biosynthesis. May be involved in the synthesis of very-long-chain fatty acids. The polypeptide is Putative acyl carrier protein, mitochondrial (Schizosaccharomyces pombe (strain 972 / ATCC 24843) (Fission yeast)).